We begin with the raw amino-acid sequence, 405 residues long: MQLNKVVLAYSGGLDTSVIIPWLKENFSCEVIAVVVDVGQEDDFETIKERAYKTGASKVYIEDAKAEFVKEYIFPTLKAGAVYEGKYLLGTSMARPLIAKRLVEIAKKENADAIAHGATGKGNDQVRFEVTIKALMPNIKIIAPWRMWNLKSREDELNYLAQKGIDIPFKKEESYSTDWNIWHLSHEGLELEDPWNMPNFEKVLMIIKNPFSLNDEPETIEIEFEKGVPIKINGKEMNCVELLKYLNKKGAEHGIGIVDIVENRLVGMKSRGVYETPGGTILHYAHRELEYLCLDRATLHFKEMVAIRFAELVYDGLWFSPLREALSAFVDKTQEVVNGTVKLVLYRGNIYSAGSKSPNSLYIKDLATFEEDQMYNQKDAEGFINLFGLPLKVFGMVNKKAGDSD.

9 to 17 provides a ligand contact to ATP; that stretch reads AYSGGLDTS. Residues Tyr87 and Ser92 each contribute to the L-citrulline site. ATP is bound at residue Gly117. Positions 119, 123, and 124 each coordinate L-aspartate. L-citrulline is bound at residue Asn123. L-citrulline is bound by residues Arg127, Ser176, Ser185, Glu262, and Tyr274.

It belongs to the argininosuccinate synthase family. Type 1 subfamily. In terms of assembly, homotetramer.

The protein localises to the cytoplasm. The catalysed reaction is L-citrulline + L-aspartate + ATP = 2-(N(omega)-L-arginino)succinate + AMP + diphosphate + H(+). Its pathway is amino-acid biosynthesis; L-arginine biosynthesis; L-arginine from L-ornithine and carbamoyl phosphate: step 2/3. This is Argininosuccinate synthase from Caldicellulosiruptor saccharolyticus (strain ATCC 43494 / DSM 8903 / Tp8T 6331).